Reading from the N-terminus, the 73-residue chain is U3-agatoxin-Ao1e (73 aa).

The N-terminal stretch at 1–20 (MRTIISLLLLSAMVFAVIEA) is a signal peptide. Positions 21-34 (ISLEEGLQLFEGER) are excised as a propeptide. Disulfide bonds link cysteine 36–cysteine 52, cysteine 43–cysteine 57, cysteine 51–cysteine 67, and cysteine 59–cysteine 65. Asparagine 71 is subject to Asparagine amide.

Belongs to the neurotoxin 07 (Beta/delta-agtx) family. 03 (aga-4) subfamily. Aga sub-subfamily. Expressed by the venom gland.

The protein localises to the secreted. Its function is as follows. Insecticidal neurotoxin that induces an irreversible spastic paralysis when injected into insects. Modifies presynaptic voltage-gated sodium channels (Nav), causing them to open at the normal resting potential of the nerve. This leads to spontaneous release of neurotransmitter and repetitive action potentials in motor neurons. The polypeptide is U3-agatoxin-Ao1e (Agelena orientalis (Funnel-web spider)).